The following is a 281-amino-acid chain: Microtubule-associated protein RP/EB family member 3 (281 aa).

Positions 14–116 (NLSRHDMLAW…FIQWFKKFFD (103 aa)) constitute a Calponin-homology (CH) domain. Residues 157–181 (VPQRTSPTGPKNMQTSGRLSNVAPP) form a disordered region. Residues 158–175 (PQRTSPTGPKNMQTSGRL) are compositionally biased toward polar residues. 2 positions are modified to phosphoserine: serine 162 and serine 176. Residues 194 to 264 (GGHETDAQIL…LYATEEGFAP (71 aa)) enclose the EB1 C-terminal domain. Residues 217–260 (DGLEKERDFYFSKLRDIELICQEHESENSPVISGIIGILYATEE) form an APC-binding region. The segment at 217–281 (DGLEKERDFY…EHQQEDQDEY (65 aa)) is DCTN1-binding. A disordered region spans residues 261–281 (GFAPPEDDEIEEHQQEDQDEY). The span at 272–281 (EHQQEDQDEY) shows a compositional bias: basic and acidic residues.

Belongs to the MAPRE family. Homodimer. Heterodimer with MAPRE1. Binds monomeric and polymerized GTP-bound tubulin. Interacts with APC2. Interacts with DCTN1 and SRCIN1. Binds to the C-terminal domain of APC. Interacts (via C-terminus) with CLIP1. Interacts with SLAIN2 and SLAIN1. Interacts with AKAP9. Interacts with PDE4DIP. Interacts with PDE4DIP isoform 13/MMG8/SMYLE; this interaction is required for its recruitment to the Golgi apparatus. Predominantly expressed in brain and muscle.

The protein localises to the cytoplasm. It localises to the cytoskeleton. In terms of biological role, plus-end tracking protein (+TIP) that binds to the plus-end of microtubules and regulates the dynamics of the microtubule cytoskeleton. Promotes microtubule growth. May be involved in spindle function by stabilizing microtubules and anchoring them at centrosomes. Also acts as a regulator of minus-end microtubule organization: interacts with the complex formed by AKAP9 and PDE4DIP, leading to recruit CAMSAP2 to the Golgi apparatus, thereby tethering non-centrosomal minus-end microtubules to the Golgi, an important step for polarized cell movement. Promotes elongation of CAMSAP2-decorated microtubule stretches on the minus-end of microtubules. In Homo sapiens (Human), this protein is Microtubule-associated protein RP/EB family member 3 (MAPRE3).